Consider the following 383-residue polypeptide: Processive diacylglycerol beta-glucosyltransferase (383 aa).

Belongs to the glycosyltransferase 28 family. UgtP subfamily.

The protein resides in the cell membrane. It catalyses the reaction a 1,2-diacyl-3-O-(beta-D-glucopyranosyl)-sn-glycerol + UDP-alpha-D-glucose = a 1,2-diacyl-3-O-(beta-D-Glc-(1-&gt;6)-beta-D-Glc)-sn-glycerol + UDP + H(+). It carries out the reaction a 1,2-diacyl-3-O-(beta-D-Glc-(1-&gt;6)-beta-D-Glc)-sn-glycerol + UDP-alpha-D-glucose = a 1,2-diacyl-3-O-(beta-D-Glc-(1-&gt;6)-beta-D-Glc-(1-&gt;6)-beta-D-Glc)-sn-glycerol + UDP + H(+). The enzyme catalyses a 1,2-diacyl-sn-glycerol + UDP-alpha-D-glucose = a 1,2-diacyl-3-O-(beta-D-glucopyranosyl)-sn-glycerol + UDP + H(+). Its pathway is glycolipid metabolism; diglucosyl-diacylglycerol biosynthesis. Its function is as follows. Processive glucosyltransferase involved in the biosynthesis of both the bilayer- and non-bilayer-forming membrane glucolipids. Is able to successively transfer up to three glucosyl residues to diacylglycerol (DAG), thereby catalyzing the formation of beta-monoglucosyl-DAG (3-O-(beta-D-glucopyranosyl)-1,2-diacyl-sn-glycerol), beta-diglucosyl-DAG (3-O-(beta-D-glucopyranosyl-beta-(1-&gt;6)-D-glucopyranosyl)-1,2-diacyl-sn-glycerol) and beta-triglucosyl-DAG (3-O-(beta-D-glucopyranosyl-beta-(1-&gt;6)-D-glucopyranosyl-beta-(1-&gt;6)-D-glucopyranosyl)-1,2-diacyl-sn-glycerol). Beta-diglucosyl-DAG is the predominant glycolipid found in Bacillales and is also used as a membrane anchor for lipoteichoic acid (LTA). The sequence is that of Processive diacylglycerol beta-glucosyltransferase from Bacillus pumilus (strain SAFR-032).